We begin with the raw amino-acid sequence, 517 residues long: Light-independent protochlorophyllide reductase subunit B (517 aa).

Position 36 (Asp36) interacts with [4Fe-4S] cluster. The active-site Proton donor is the Asp285. Gly420–Leu421 is a binding site for substrate.

It belongs to the ChlB/BchB/BchZ family. Protochlorophyllide reductase is composed of three subunits; BchL, BchN and BchB. Forms a heterotetramer of two BchB and two BchN subunits. The cofactor is [4Fe-4S] cluster.

The catalysed reaction is chlorophyllide a + oxidized 2[4Fe-4S]-[ferredoxin] + 2 ADP + 2 phosphate = protochlorophyllide a + reduced 2[4Fe-4S]-[ferredoxin] + 2 ATP + 2 H2O. It participates in porphyrin-containing compound metabolism; bacteriochlorophyll biosynthesis (light-independent). Functionally, component of the dark-operative protochlorophyllide reductase (DPOR) that uses Mg-ATP and reduced ferredoxin to reduce ring D of protochlorophyllide (Pchlide) to form chlorophyllide a (Chlide). This reaction is light-independent. The NB-protein (BchN-BchB) is the catalytic component of the complex. This is Light-independent protochlorophyllide reductase subunit B from Bradyrhizobium sp. (strain BTAi1 / ATCC BAA-1182).